Here is a 265-residue protein sequence, read N- to C-terminus: Aquaporin-5 (265 aa).

The Cytoplasmic segment spans residues 1 to 12 (MKKEVCSAAFLK). A helical membrane pass occupies residues 13-33 (AVFAEFLATLIFVFFGLGSAL). The Extracellular segment spans residues 34-39 (KWPSAM). The chain crosses the membrane as a helical span at residues 40 to 60 (PSVLQISLAFGLAIGTMAQAL). The Cytoplasmic segment spans residues 61 to 65 (GPVSG). The segment at residues 66 to 74 (GHMNPAITL) is an intramembrane region (discontinuously helical). The NPA 1 motif lies at 69 to 71 (NPA). At 75–87 (ALLVGNQISLLRA) the chain is on the cytoplasmic side. Residues 88–108 (VFYLVAQLVGAIAGAAILYGL) form a helical membrane-spanning segment. Residues 109–126 (APYNARSNLAVNALNNNT) are Extracellular-facing. Residues Asn-124 and Asn-125 are each glycosylated (N-linked (GlcNAc...) asparagine). Residues 127–147 (TAGQAVVAEMILTFQLALCVF) traverse the membrane as a helical segment. At 148 to 158 (SSTDSRRTSPV) the chain is on the cytoplasmic side. A helical transmembrane segment spans residues 159 to 179 (GSPALSIGLSVTLGHLVGIYF). Thr-180 is a topological domain (extracellular). Positions 181–191 (GCSMNPARSFG) form an intramembrane region, discontinuously helical. The NPA 2 signature appears at 185-187 (NPA). Topologically, residues 192-203 (PAVIMSRFSSAH) are extracellular. The chain crosses the membrane as a helical span at residues 204 to 224 (WVFWVGPIVGAATAAIIYFYL). At 225–265 (LFPHSLSLSDRVAILKGTYEPDEDWEESQEERKKTMELTAH) the chain is on the cytoplasmic side.

The protein belongs to the MIP/aquaporin (TC 1.A.8) family. In terms of assembly, homotetramer; each monomer provides an independent water pore. Interacts with TRPV4; the interaction is probably indirect and regulates TRPV4 activation by hypotonicity.

Its subcellular location is the apical cell membrane. It localises to the cell membrane. It is found in the cytoplasmic vesicle membrane. The catalysed reaction is H2O(in) = H2O(out). Functionally, aquaporins form homotetrameric transmembrane channels, with each monomer independently mediating water transport across the plasma membrane along its osmotic gradient. Plays an important role in fluid secretion in salivary glands. Required for TRPV4 activation by hypotonicity. Together with TRPV4, controls regulatory volume decrease in salivary epithelial cells. Seems to play a redundant role in water transport in the eye, lung and in sweat glands. The sequence is that of Aquaporin-5 from Ovis aries (Sheep).